The primary structure comprises 581 residues: Frizzled-8 (581 aa).

The first 23 residues, 1 to 23 (MESLSLSLLLLVSWLQGSQCAAA), serve as a signal peptide directing secretion. The 121-residue stretch at 24 to 144 (KELSCQEITV…GNPDTLCMDY (121 aa)) folds into the FZ domain. Over 24–239 (KELSCQEITV…PEERTFTEFW (216 aa)) the chain is Extracellular. Cystine bridges form between C28–C89, C36–C82, C73–C111, C100–C141, and C104–C128. An N-linked (GlcNAc...) asparagine glycan is attached at N42. 64 to 71 (QFWPLVVI) provides a ligand contact to hexadecanoate. The wnt-binding stretch occupies residues 88 to 93 (ICLEDY). The interval 140–146 (LCMDYYN) is wnt-binding. N146 carries an N-linked (GlcNAc...) asparagine glycan. Positions 151–189 (TTAAPSHPEPPKPPARSVPKGRTRVEPPRSRSRATGCES) are disordered. Positions 157-166 (HPEPPKPPAR) are enriched in pro residues. Residues 240-260 (IGLWSVLCFASTFATVSTFLI) form a helical membrane-spanning segment. Topologically, residues 261–271 (DMERFKYPERP) are cytoplasmic. The chain crosses the membrane as a helical span at residues 272–292 (IIFLSACYLLVSTGYLIRLIA). Topologically, residues 293 to 320 (GHEKVACSRGELDLEHIIHYETTGPALC) are extracellular. A helical membrane pass occupies residues 321–341 (TLVFLLIYFFGMASSIWWVIL). Residues 342-377 (SLTWFLAAGMKWGNEAIAGYSQYFHLAAWLVPSIKS) lie on the Cytoplasmic side of the membrane. The helical transmembrane segment at 378–398 (IAVLALSSVDGDPVAGICFVG) threads the bilayer. The Extracellular segment spans residues 399–407 (NQNLDNLRG). The chain crosses the membrane as a helical span at residues 408–428 (FVLAPLVIYLFIGSMFLLAGF). At 429-454 (VSLFRIRSVIKQGGTKTDKLEKLMIR) the chain is on the cytoplasmic side. The chain crosses the membrane as a helical span at residues 455 to 475 (IGIFSVLYTVPATIVVACFFY). Over 476 to 505 (EQHNRQGWEVAHNCNSCQPEMAQPHRPDYA) the chain is Extracellular. A helical transmembrane segment spans residues 506–526 (VFMLKYFMCLVVGITSGVWIW). At 527–581 (SGKTLESWRAFCTRCCWGSKATGGSMYSDVSTGLTWRSGTGSSVSCPKQMPLSQV) the chain is on the cytoplasmic side. A Lys-Thr-X-X-X-Trp motif, mediates interaction with the PDZ domain of Dvl family members motif is present at residues 529-534 (KTLESW). A PDZ-binding motif is present at residues 579-581 (SQV).

It belongs to the G-protein coupled receptor Fz/Smo family. In terms of assembly, interacts with lypd6 and the interaction is strongly enhanced by wnt3a.

It is found in the membrane. The protein localises to the cell membrane. Its function is as follows. Receptor for Wnt proteins. Most of frizzled receptors are coupled to the beta-catenin canonical signaling pathway, which leads to the activation of disheveled proteins, inhibition of GSK-3 kinase, nuclear accumulation of beta-catenin and activation of Wnt target genes. A second signaling pathway involving PKC and calcium fluxes has been seen for some family members, but it is not yet clear if it represents a distinct pathway or if it can be integrated in the canonical pathway, as PKC seems to be required for Wnt-mediated inactivation of GSK-3 kinase. Both pathways seem to involve interactions with G-proteins. May be involved in transduction and intercellular transmission of polarity information during tissue morphogenesis and/or in differentiated tissues. Activation by Wnt8, Wnt5A or Wnt3A induces expression of beta-catenin target genes. Displays an axis-inducing activity. This chain is Frizzled-8 (fzd8), found in Xenopus laevis (African clawed frog).